The primary structure comprises 191 residues: Ribosomal RNA small subunit methyltransferase G (191 aa).

S-adenosyl-L-methionine is bound by residues Gly-62, Phe-67, 111–112 (IE), and Arg-124.

Belongs to the methyltransferase superfamily. RNA methyltransferase RsmG family.

The protein resides in the cytoplasm. It carries out the reaction guanosine(527) in 16S rRNA + S-adenosyl-L-methionine = N(7)-methylguanosine(527) in 16S rRNA + S-adenosyl-L-homocysteine. Its function is as follows. Specifically methylates the N7 position of guanine in position 527 of 16S rRNA. This chain is Ribosomal RNA small subunit methyltransferase G, found in Rickettsia prowazekii (strain Madrid E).